Reading from the N-terminus, the 200-residue chain is MNKAELIDVLTQKLGSDRRQATAAVENVVDTIVRAVHKGDSVTITGFGVFEQRRRAARVARNPRTGETVKVKPTSVPAFRPGAQFKAVVAGAQRLPLEGPAVKRGVATSAAKKAAIKKAPVKKALAKKAATKAPAKKAVKAPAKKITTAVKVPAKKATKVVKKVAAKAPVRKATTRALAKKAAVKKAPAKKVTAAKRGRK.

The interval 1 to 90 (MNKAELIDVL…PGAQFKAVVA (90 aa)) is bacterial histone-like domain. N6-acetyllysine is present on residues K3, K72, K86, K103, K137, K144, and K156. The degenerate repeats region stretch occupies residues 101-200 (AVKRGVATSA…KVTAAKRGRK (100 aa)). A disordered region spans residues 179–200 (AKKAAVKKAPAKKVTAAKRGRK).

Belongs to the bacterial histone-like protein family. Long actinobacterial subfamily. In terms of assembly, binds to human laminin-2. Post-translationally, may also be methylated and possibly phosphorylated in vivo.

The protein localises to the cytoplasm. It localises to the nucleoid. It is found in the secreted. Its subcellular location is the cell wall. The protein resides in the cell surface. It carries out the reaction 4 Fe(2+) + O2 + 4 H(+) = 4 Fe(3+) + 2 H2O. A nucleoid-associated protein (NAP) that plays a role in local chromosome architecture and chromosome compactation. Required for biofilm formation, stress survival and possibly in cell wall assembly, probably influences transcription. RNase E and HupB jointly contribute to cellular adaptation to changing growth conditions and survival during antibiotic treatment and in the host. Functionally, binds Fe(3+) but not Fe(2+). Has ferroxidase activity, converts Fe(2+) into Fe(3+) and in the presence of H(2)O(2) prevents the generation of hydroxyl radicals (the Fenton reaction). Protects DNA from damage in the presence of FeSO(4) and H(2)O(2). May function in iron storage. Its function is as follows. May be involved in entry into human Schwann cells. The protein is DNA-binding protein HupB of Mycobacterium leprae (strain TN).